The sequence spans 472 residues: UDP-glycosyltransferase 708G2 (472 aa).

The active-site Proton acceptor is the His23. His23 is a binding site for an anthocyanidin. Residue Asp117 is the Charge relay of the active site. Thr140 is a UDP-alpha-D-glucose binding site. The UDP stretch occupies residues 283–284 (SR). Positions 346, 348, 363, 366, 367, 368, and 371 each coordinate UDP-alpha-D-glucose. Residue Gly386 coordinates an anthocyanidin. UDP-alpha-D-glucose-binding residues include Asp387 and Gln388.

The protein belongs to the UDP-glycosyltransferase family. Expressed at low levels in leaves, flowers and immature leaves.

The catalysed reaction is a 3'-hydro-2'-hydroxy-beta-oxodihydrochalcone + UDP-alpha-D-glucose = a 3'-(beta-D-glucopyranosyl)-2'-hydroxy-beta-oxodihydrochalcone + UDP + H(+). UDP-glucose-dependent glucosyltransferase catalyzing the C-glucosylation of 2-hydroxyflavanones (2-hydroxylnaringenin and 2-hydroxypinocembrin) and phloretin. No activity with flavanones, flavones or flavonols. Exhibits C-glucosylation activity toward 2-phenyl-2',4',6'-trihydroxyacetophenone. Can use UDP-xylose as sugar donor, but catalytic efficiency is much lower toward UDP-xylose than toward UDP-glucose. This is UDP-glycosyltransferase 708G2 (UGT708G2) from Citrus unshiu (Satsuma mandarin).